Consider the following 207-residue polypeptide: 3-demethoxyubiquinol 3-hydroxylase (207 aa).

Fe cation is bound by residues Glu-56, Glu-86, His-89, Glu-138, Glu-170, and His-173.

This sequence belongs to the COQ7 family. Fe cation serves as cofactor.

It localises to the cell membrane. The catalysed reaction is a 5-methoxy-2-methyl-3-(all-trans-polyprenyl)benzene-1,4-diol + AH2 + O2 = a 3-demethylubiquinol + A + H2O. It functions in the pathway cofactor biosynthesis; ubiquinone biosynthesis. Its function is as follows. Catalyzes the hydroxylation of 2-nonaprenyl-3-methyl-6-methoxy-1,4-benzoquinol during ubiquinone biosynthesis. The polypeptide is 3-demethoxyubiquinol 3-hydroxylase (Cupriavidus pinatubonensis (strain JMP 134 / LMG 1197) (Cupriavidus necator (strain JMP 134))).